The chain runs to 148 residues: Glutaredoxin-C10 (148 aa).

Residues 16 to 55 form a disordered region; the sequence is TLDLTVHPPPPPPLPPPAPSTVSSSTASTSLSFDEEETSE. The span at 22-34 shows a compositional bias: pro residues; sequence HPPPPPPLPPPAP. Over residues 35 to 47 the composition is skewed to low complexity; it reads STVSSSTASTSLS. Positions 55–147 constitute a Glutaredoxin domain; the sequence is ESKIGRLISE…PRLVEVGALW (93 aa). Cys-76 and Cys-79 form a disulfide bridge.

Belongs to the glutaredoxin family. CC-type subfamily.

Its subcellular location is the cytoplasm. Its function is as follows. Has a glutathione-disulfide oxidoreductase activity in the presence of NADPH and glutathione reductase. Reduces low molecular weight disulfides and proteins. This Arabidopsis thaliana (Mouse-ear cress) protein is Glutaredoxin-C10 (GRXC10).